Consider the following 55-residue polypeptide: Large ribosomal subunit protein bL33 (55 aa).

It belongs to the bacterial ribosomal protein bL33 family.

In Sodalis glossinidius (strain morsitans), this protein is Large ribosomal subunit protein bL33.